Reading from the N-terminus, the 293-residue chain is Proteinase T (293 aa).

Positions 1 to 12 (EFIEQDAVVTIS) are excised as a propeptide. The Peptidase S8 domain maps to 19 to 293 (PWGLARISSQ…VLINNGEGSA (275 aa)). Disulfide bonds link Cys-46–Cys-137 and Cys-192–Cys-262. Active-site charge relay system residues include Asp-51, His-83, and Ser-238.

It belongs to the peptidase S8 family.

Functionally, serine proteinase. In Parengyodontium album (Tritirachium album), this protein is Proteinase T (PROT).